We begin with the raw amino-acid sequence, 256 residues long: Neuroendocrine secretory protein 55 (256 aa).

The signal sequence occupies residues 1 to 46 (MDRRSRAHQWRRARHNYNDLCPPIGRRAATALLWLSCSIALLRALA). Residues 61–256 (SFLNAHHRSA…RKGPIPIRRH (196 aa)) form a disordered region. Residues 86–103 (ESDHEHEEAEPELARPEC) are compositionally biased toward basic and acidic residues. Composition is skewed to acidic residues over residues 104-139 (LEYDQDDYETETDSETEPESDIQSETEFETEPETEP) and 206-216 (LDEDPRDPEES). Basic residues predominate over residues 225-236 (QPRRCKTRRPAR).

Belongs to the NESP55 family. Binds keratan sulfate chains. Post-translationally, may be proteolytically processed to give rise to a number of active peptides.

It is found in the cytoplasmic vesicle. It localises to the secretory vesicle. The protein resides in the synaptic vesicle. Its subcellular location is the secreted. This is Neuroendocrine secretory protein 55 from Rattus norvegicus (Rat).